The sequence spans 186 residues: Ribosome-recycling factor (186 aa).

This sequence belongs to the RRF family.

The protein resides in the cytoplasm. Responsible for the release of ribosomes from messenger RNA at the termination of protein biosynthesis. May increase the efficiency of translation by recycling ribosomes from one round of translation to another. The chain is Ribosome-recycling factor from Rickettsia massiliae (strain Mtu5).